We begin with the raw amino-acid sequence, 306 residues long: Curved DNA-binding protein (306 aa).

One can recognise a J domain in the interval 5 to 69; sequence DYYAIMGVKP…QRRAEYDQMW (65 aa).

The protein resides in the cytoplasm. It is found in the nucleoid. Functionally, DNA-binding protein that preferentially recognizes a curved DNA sequence. It is probably a functional analog of DnaJ; displays overlapping activities with DnaJ, but functions under different conditions, probably acting as a molecular chaperone in an adaptive response to environmental stresses other than heat shock. Lacks autonomous chaperone activity; binds native substrates and targets them for recognition by DnaK. Its activity is inhibited by the binding of CbpM. The sequence is that of Curved DNA-binding protein from Escherichia coli O127:H6 (strain E2348/69 / EPEC).